We begin with the raw amino-acid sequence, 314 residues long: 4-hydroxy-3-methylbut-2-enyl diphosphate reductase (314 aa).

Cysteine 12 serves as a coordination point for [4Fe-4S] cluster. 2 residues coordinate (2E)-4-hydroxy-3-methylbut-2-enyl diphosphate: histidine 41 and histidine 74. Histidine 41 and histidine 74 together coordinate dimethylallyl diphosphate. Isopentenyl diphosphate contacts are provided by histidine 41 and histidine 74. Residue cysteine 96 coordinates [4Fe-4S] cluster. Histidine 124 lines the (2E)-4-hydroxy-3-methylbut-2-enyl diphosphate pocket. Histidine 124 is a binding site for dimethylallyl diphosphate. Histidine 124 serves as a coordination point for isopentenyl diphosphate. The active-site Proton donor is the glutamate 126. Position 167 (threonine 167) interacts with (2E)-4-hydroxy-3-methylbut-2-enyl diphosphate. Cysteine 197 contacts [4Fe-4S] cluster. (2E)-4-hydroxy-3-methylbut-2-enyl diphosphate is bound by residues serine 225, serine 226, asparagine 227, and serine 269. Residues serine 225, serine 226, asparagine 227, and serine 269 each coordinate dimethylallyl diphosphate. Residues serine 225, serine 226, asparagine 227, and serine 269 each coordinate isopentenyl diphosphate.

It belongs to the IspH family. [4Fe-4S] cluster serves as cofactor.

It catalyses the reaction isopentenyl diphosphate + 2 oxidized [2Fe-2S]-[ferredoxin] + H2O = (2E)-4-hydroxy-3-methylbut-2-enyl diphosphate + 2 reduced [2Fe-2S]-[ferredoxin] + 2 H(+). It carries out the reaction dimethylallyl diphosphate + 2 oxidized [2Fe-2S]-[ferredoxin] + H2O = (2E)-4-hydroxy-3-methylbut-2-enyl diphosphate + 2 reduced [2Fe-2S]-[ferredoxin] + 2 H(+). It functions in the pathway isoprenoid biosynthesis; dimethylallyl diphosphate biosynthesis; dimethylallyl diphosphate from (2E)-4-hydroxy-3-methylbutenyl diphosphate: step 1/1. It participates in isoprenoid biosynthesis; isopentenyl diphosphate biosynthesis via DXP pathway; isopentenyl diphosphate from 1-deoxy-D-xylulose 5-phosphate: step 6/6. In terms of biological role, catalyzes the conversion of 1-hydroxy-2-methyl-2-(E)-butenyl 4-diphosphate (HMBPP) into a mixture of isopentenyl diphosphate (IPP) and dimethylallyl diphosphate (DMAPP). Acts in the terminal step of the DOXP/MEP pathway for isoprenoid precursor biosynthesis. The polypeptide is 4-hydroxy-3-methylbut-2-enyl diphosphate reductase (Haemophilus influenzae (strain ATCC 51907 / DSM 11121 / KW20 / Rd)).